Consider the following 759-residue polypeptide: 1,4-alpha-glucan branching enzyme GlgB (759 aa).

The tract at residues 1–22 is disordered; the sequence is MAKTKGLPKDTAVTPSPHLRPH. The Nucleophile role is filled by D422. E475 acts as the Proton donor in catalysis.

This sequence belongs to the glycosyl hydrolase 13 family. GlgB subfamily. As to quaternary structure, monomer.

The enzyme catalyses Transfers a segment of a (1-&gt;4)-alpha-D-glucan chain to a primary hydroxy group in a similar glucan chain.. It functions in the pathway glycan biosynthesis; glycogen biosynthesis. Catalyzes the formation of the alpha-1,6-glucosidic linkages in glycogen by scission of a 1,4-alpha-linked oligosaccharide from growing alpha-1,4-glucan chains and the subsequent attachment of the oligosaccharide to the alpha-1,6 position. The sequence is that of 1,4-alpha-glucan branching enzyme GlgB from Mycobacterium sp. (strain KMS).